The chain runs to 628 residues: Chaperone protein HtpG (628 aa).

The a; substrate-binding stretch occupies residues 1–340 (MKGQETRGFQ…SNDLPLNVSR (340 aa)). The tract at residues 341–556 (EILQDSRVTQ…ADDMTTQMAK (216 aa)) is b. A c region spans residues 557–628 (LFAAAGQAAP…IRRMNQLLNA (72 aa)).

Belongs to the heat shock protein 90 family. Homodimer.

The protein resides in the cytoplasm. Functionally, molecular chaperone. Has ATPase activity. The chain is Chaperone protein HtpG from Sodalis glossinidius (strain morsitans).